We begin with the raw amino-acid sequence, 730 residues long: Catalase R (730 aa).

The active site involves H105. Y392 is a heme binding site. Positions 403–433 are disordered; the sequence is PNFEQIPVNRPRKPVHNNNRDGFGQQQIPTN.

This sequence belongs to the catalase family. Requires heme as cofactor.

It carries out the reaction 2 H2O2 = O2 + 2 H2O. Occurs in almost all aerobically respiring organisms and serves to protect cells from the toxic effects of hydrogen peroxide. This chain is Catalase R (catR), found in Aspergillus niger.